The chain runs to 231 residues: 7-cyano-7-deazaguanine synthase (231 aa).

Residue 11–21 (LSAGLDSTVNA) participates in ATP binding. Zn(2+) contacts are provided by cysteine 197, cysteine 205, cysteine 208, and cysteine 211.

This sequence belongs to the QueC family. Requires Zn(2+) as cofactor.

The enzyme catalyses 7-carboxy-7-deazaguanine + NH4(+) + ATP = 7-cyano-7-deazaguanine + ADP + phosphate + H2O + H(+). It participates in purine metabolism; 7-cyano-7-deazaguanine biosynthesis. Catalyzes the ATP-dependent conversion of 7-carboxy-7-deazaguanine (CDG) to 7-cyano-7-deazaguanine (preQ(0)). This chain is 7-cyano-7-deazaguanine synthase, found in Bdellovibrio bacteriovorus (strain ATCC 15356 / DSM 50701 / NCIMB 9529 / HD100).